A 195-amino-acid chain; its full sequence is Probable molybdenum cofactor guanylyltransferase (195 aa).

GTP contacts are provided by residues 9–11 (LAG), Lys21, Asp69, and Asp100. Asp100 lines the Mg(2+) pocket.

Belongs to the MobA family. Mg(2+) serves as cofactor.

Its subcellular location is the cytoplasm. It catalyses the reaction Mo-molybdopterin + GTP + H(+) = Mo-molybdopterin guanine dinucleotide + diphosphate. In terms of biological role, transfers a GMP moiety from GTP to Mo-molybdopterin (Mo-MPT) cofactor (Moco or molybdenum cofactor) to form Mo-molybdopterin guanine dinucleotide (Mo-MGD) cofactor. The sequence is that of Probable molybdenum cofactor guanylyltransferase from Geobacillus sp. (strain WCH70).